Consider the following 186-residue polypeptide: Elongation factor P (186 aa).

This sequence belongs to the elongation factor P family.

It is found in the cytoplasm. It participates in protein biosynthesis; polypeptide chain elongation. Its function is as follows. Involved in peptide bond synthesis. Stimulates efficient translation and peptide-bond synthesis on native or reconstituted 70S ribosomes in vitro. Probably functions indirectly by altering the affinity of the ribosome for aminoacyl-tRNA, thus increasing their reactivity as acceptors for peptidyl transferase. This chain is Elongation factor P, found in Prochlorococcus marinus (strain MIT 9303).